Here is a 337-residue protein sequence, read N- to C-terminus: RNA 3'-terminal phosphate cyclase (337 aa).

ATP-binding positions include glutamine 101 and 282-285; that span reads HMSD. Histidine 306 (tele-AMP-histidine intermediate) is an active-site residue.

It belongs to the RNA 3'-terminal cyclase family. Type 1 subfamily.

It is found in the cytoplasm. It carries out the reaction a 3'-end 3'-phospho-ribonucleotide-RNA + ATP = a 3'-end 2',3'-cyclophospho-ribonucleotide-RNA + AMP + diphosphate. In terms of biological role, catalyzes the conversion of 3'-phosphate to a 2',3'-cyclic phosphodiester at the end of RNA. The mechanism of action of the enzyme occurs in 3 steps: (A) adenylation of the enzyme by ATP; (B) transfer of adenylate to an RNA-N3'P to produce RNA-N3'PP5'A; (C) and attack of the adjacent 2'-hydroxyl on the 3'-phosphorus in the diester linkage to produce the cyclic end product. The biological role of this enzyme is unknown but it is likely to function in some aspects of cellular RNA processing. This Saccharolobus islandicus (strain M.16.4 / Kamchatka #3) (Sulfolobus islandicus) protein is RNA 3'-terminal phosphate cyclase.